The chain runs to 644 residues: Tripeptidyl-peptidase sed1 (644 aa).

Residues 1–18 (MRLSHVLLGTAAAAGVLA) form the signal peptide. Positions 19–196 (SPTPNDYVVH…KARSIEKRSF (178 aa)) are cleaved as a propeptide — removed in mature form. The region spanning 224–643 (AITPLCISAL…PALLDLFMSL (420 aa)) is the Peptidase S53 domain. A glycan (N-linked (GlcNAc...) asparagine) is linked at asparagine 235. Active-site charge relay system residues include glutamate 300 and aspartate 304. Residues asparagine 326, asparagine 332, and asparagine 519 are each glycosylated (N-linked (GlcNAc...) asparagine). Serine 561 acts as the Charge relay system in catalysis. The Ca(2+) site is built by aspartate 602, isoleucine 603, glycine 621, and aspartate 623.

The cofactor is Ca(2+). In terms of processing, N-glycosylated.

Its subcellular location is the secreted. The protein resides in the extracellular space. It carries out the reaction Release of an N-terminal tripeptide from a polypeptide.. Functionally, secreted tripeptidyl-peptidase which degrades proteins at acidic pHs and is involved in virulence. The protein is Tripeptidyl-peptidase sed1 (sed1) of Aspergillus fumigatus (strain ATCC MYA-4609 / CBS 101355 / FGSC A1100 / Af293) (Neosartorya fumigata).